We begin with the raw amino-acid sequence, 467 residues long: Hydroxymethylglutaryl-CoA synthase erg13A (467 aa).

(3S)-3-hydroxy-3-methylglutaryl-CoA is bound at residue A35. The active-site Proton donor/acceptor is E86. Residues C118, T160, S209, H259, K268, N334, and S368 each coordinate (3S)-3-hydroxy-3-methylglutaryl-CoA. The active-site Acyl-thioester intermediate is C118. The Proton donor/acceptor role is filled by H259.

The protein belongs to the thiolase-like superfamily. HMG-CoA synthase family.

It carries out the reaction acetoacetyl-CoA + acetyl-CoA + H2O = (3S)-3-hydroxy-3-methylglutaryl-CoA + CoA + H(+). It participates in metabolic intermediate biosynthesis; (R)-mevalonate biosynthesis; (R)-mevalonate from acetyl-CoA: step 2/3. Its function is as follows. Hydroxymethylglutaryl-CoA synthase; part of the first module of ergosterol biosynthesis pathway that includes the early steps of the pathway, conserved across all eukaryotes, and which results in the formation of mevalonate from acetyl-coenzyme A (acetyl-CoA). Erg13A and erg13B condense acetyl-CoA with acetoacetyl-CoA to form hydroxymethylglutaryl-CoA (HMG-CoA). The first module starts with the action of the cytosolic acetyl-CoA acetyltransferase erg10B that catalyzes the formation of acetoacetyl-CoA. The hydroxymethylglutaryl-CoA synthases erg13A and erg13B then condense acetyl-CoA with acetoacetyl-CoA to form HMG-CoA. The rate-limiting step of the early module is the reduction to mevalonate by the 3-hydroxy-3-methylglutaryl-coenzyme A (HMG-CoA) reductases hmg1 and hmg2. Mevalonate is also a precursor for the extracellular siderophore triacetylfusarinine C (TAFC). In Aspergillus fumigatus (strain ATCC MYA-4609 / CBS 101355 / FGSC A1100 / Af293) (Neosartorya fumigata), this protein is Hydroxymethylglutaryl-CoA synthase erg13A.